Here is a 471-residue protein sequence, read N- to C-terminus: 3-isopropylmalate dehydratase large subunit (471 aa).

Positions 351, 414, and 417 each coordinate [4Fe-4S] cluster.

The protein belongs to the aconitase/IPM isomerase family. LeuC type 1 subfamily. As to quaternary structure, heterodimer of LeuC and LeuD. [4Fe-4S] cluster serves as cofactor.

It catalyses the reaction (2R,3S)-3-isopropylmalate = (2S)-2-isopropylmalate. Its pathway is amino-acid biosynthesis; L-leucine biosynthesis; L-leucine from 3-methyl-2-oxobutanoate: step 2/4. Functionally, catalyzes the isomerization between 2-isopropylmalate and 3-isopropylmalate, via the formation of 2-isopropylmaleate. The protein is 3-isopropylmalate dehydratase large subunit of Colwellia psychrerythraea (strain 34H / ATCC BAA-681) (Vibrio psychroerythus).